Here is a 276-residue protein sequence, read N- to C-terminus: Diaminopimelate epimerase (276 aa).

Residues Asn13, Gln46, and Asn66 each coordinate substrate. Cys75 acts as the Proton donor in catalysis. Substrate-binding positions include 76-77 (GN), Asn159, Asn192, and 210-211 (ER). The active-site Proton acceptor is Cys219. 220-221 (GS) is a substrate binding site.

Belongs to the diaminopimelate epimerase family. As to quaternary structure, homodimer.

It localises to the cytoplasm. It carries out the reaction (2S,6S)-2,6-diaminopimelate = meso-2,6-diaminopimelate. Its pathway is amino-acid biosynthesis; L-lysine biosynthesis via DAP pathway; DL-2,6-diaminopimelate from LL-2,6-diaminopimelate: step 1/1. Functionally, catalyzes the stereoinversion of LL-2,6-diaminopimelate (L,L-DAP) to meso-diaminopimelate (meso-DAP), a precursor of L-lysine and an essential component of the bacterial peptidoglycan. This Coxiella burnetii (strain CbuK_Q154) (Coxiella burnetii (strain Q154)) protein is Diaminopimelate epimerase.